A 544-amino-acid polypeptide reads, in one-letter code: Prolyl 4-hydroxylase subunit alpha-3 (544 aa).

Positions 1–24 are cleaved as a signal peptide; the sequence is MGPGARLAALLVLLKLGVGDPAAA. Residues 227–260 form a TPR repeat; it reads EDALDYLAFACYQVGNVSCALSLSREFLVYSPDN. N242 carries N-linked (GlcNAc...) asparagine glycosylation. Residues 422 to 529 form the Fe2OG dioxygenase domain; that stretch reads YAEYLQVVNY…KWVANKWIHE (108 aa). Residues H440 and D442 each contribute to the Fe cation site. N482 is a glycosylation site (N-linked (GlcNAc...) asparagine). H510 serves as a coordination point for Fe cation. Residue K520 coordinates 2-oxoglutarate.

It belongs to the P4HA family. Heterotetramer of two alpha-3 chains and two beta chains (the beta chain is the multi-functional PDI). Fe(2+) serves as cofactor. It depends on L-ascorbate as a cofactor. N-glycosylation plays no role in the catalytic activity.

It localises to the endoplasmic reticulum lumen. The catalysed reaction is L-prolyl-[collagen] + 2-oxoglutarate + O2 = trans-4-hydroxy-L-prolyl-[collagen] + succinate + CO2. Catalyzes the post-translational formation of 4-hydroxyproline in -Xaa-Pro-Gly- sequences in collagens and other proteins. This chain is Prolyl 4-hydroxylase subunit alpha-3 (P4ha3), found in Rattus norvegicus (Rat).